A 727-amino-acid chain; its full sequence is YTH domain-containing protein 1 (727 aa).

Over residues 1 to 12 (MAADSREEKDGE) the composition is skewed to basic and acidic residues. A disordered region spans residues 1-338 (MAADSREEKD…KHEKLSSSVR (338 aa)). S35 is subject to Phosphoserine. Residues 50-59 (DRMESTDTKR) are compositionally biased toward basic and acidic residues. Over residues 63-90 (SVHSRQLVSKPLSSSVSNNKRIVSTKGK) the composition is skewed to polar residues. Positions 91-115 (SATEYKNEEYQRSERNKRLDADRKI) are enriched in basic and acidic residues. A Glycyl lysine isopeptide (Lys-Gly) (interchain with G-Cter in SUMO2) cross-link involves residue K96. S118 and S120 each carry phosphoserine. Over residues 124–144 (EPYKNQPEKTCVRKRDPERRA) the composition is skewed to basic and acidic residues. S146 is modified (phosphoserine). T148 is subject to Phosphothreonine. Basic and acidic residues-rich tracts occupy residues 151–163 (GSER…DRRA) and 170–185 (SKEE…DHET). The segment covering 199-254 (ENEEEGVEEDVEEDEEVEEDAEEDEEVDEDGEEEEEEEEEEEEEEEEEEEEYEQDE) has biased composition (acidic residues). Residues 255–270 (RDQKEEGNDYDTRSEA) are compositionally biased toward basic and acidic residues. Residues 280-289 (FTDGSVRSGS) show a composition bias toward polar residues. S308, S315, S317, S318, and S320 each carry phosphoserine. The span at 315-325 (SGSSASESYAG) shows a compositional bias: low complexity. The YTH domain occupies 355-492 (ARFFLIKSNN…ECGTQLCLLF (138 aa)). RNA contacts are provided by residues 361–363 (KSN) and 377–378 (WS). S424 is modified (phosphoserine). W428 contacts RNA. S435 is modified (phosphoserine). D476 is a binding site for RNA. Residues 508 to 523 (RHKRRMHSQPRSRGRP) show a composition bias toward basic residues. 3 disordered regions span residues 508-564 (RHKR…PGYL), 607-643 (GMPP…HPVP), and 669-727 (AVVS…RYRR). Residues 524–564 (SRREPVRDVGRRRPEDYDIHNSRKKPRIDYPPEFHQRPGYL) are compositionally biased toward basic and acidic residues. A Phosphoserine modification is found at S545. Basic and acidic residues predominate over residues 679–727 (RERDRERERDRPRDNRRDRERDRGRDRERERERLCDRDRDRGERGRYRR).

As to quaternary structure, interacts with SRSF1. Interacts with SRSF2. Interacts with SRSF3. Interacts with SRSF7. Interacts with SRSF10. Interacts with CPSF6. Interacts with KHDRBS1/SAM68. Interacts with TRA2B. Interacts with KHDRBS3. Interacts with EMD. Interacts with RBMX. Interacts with ZCCHC8. Tyrosine phosphorylated.

Its subcellular location is the nucleus. It localises to the nucleus speckle. Regulator of alternative splicing that specifically recognizes and binds N6-methyladenosine (m6A)-containing RNAs. M6A is a modification present at internal sites of mRNAs and some non-coding RNAs and plays a role in the efficiency of mRNA splicing, processing and stability. Acts as a key regulator of exon-inclusion or exon-skipping during alternative splicing via interaction with mRNA splicing factors SRSF3 and SRSF10. Specifically binds m6A-containing mRNAs and promotes recruitment of SRSF3 to its mRNA-binding elements adjacent to m6A sites, leading to exon-inclusion during alternative splicing. In contrast, interaction with SRSF3 prevents interaction with SRSF10, a splicing factor that promotes exon skipping: this prevents SRSF10 from binding to its mRNA-binding sites close to m6A-containing regions, leading to inhibit exon skipping during alternative splicing. May also regulate alternative splice site selection. Also involved in nuclear export of m6A-containing mRNAs via interaction with SRSF3: interaction with SRSF3 facilitates m6A-containing mRNA-binding to both SRSF3 and NXF1, promoting mRNA nuclear export. Involved in S-adenosyl-L-methionine homeostasis by regulating expression of MAT2A transcripts, probably by binding m6A-containing MAT2A mRNAs. Also recognizes and binds m6A on other RNA molecules. Involved in random X inactivation mediated by Xist RNA: recognizes and binds m6A-containing Xist and promotes transcription repression activity of Xist. Also recognizes and binds m6A-containing single-stranded DNA. Involved in germline development: required for spermatogonial development in males and oocyte growth and maturation in females, probably via its role in alternative splicing. This chain is YTH domain-containing protein 1, found in Homo sapiens (Human).